The sequence spans 150 residues: Cilia- and flagella-associated protein 68 (150 aa).

Mn stretches follow at residues 99-110 (TTYDTSYNNKMP) and 140-150 (KSTYMNSYSKP).

This sequence belongs to the CFAP68 family. Microtubule inner protein component of sperm flagellar doublet microtubules.

It is found in the cytoplasm. The protein resides in the cytoskeleton. Its subcellular location is the cilium axoneme. The protein localises to the flagellum axoneme. It localises to the nucleus. It is found in the cell projection. The protein resides in the cilium. Functionally, microtubule inner protein (MIP) part of the dynein-decorated doublet microtubules (DMTs) in cilia axoneme, which is required for motile cilia beating. The polypeptide is Cilia- and flagella-associated protein 68 (Homo sapiens (Human)).